A 376-amino-acid polypeptide reads, in one-letter code: Serpin B6 (376 aa).

An N-acetylmethionine modification is found at Met1. Residue Ser151 is modified to Phosphoserine. Lys195 bears the N6-acetyllysine mark.

Belongs to the serpin family. Ov-serpin subfamily. In terms of assembly, forms a complex with the monomeric form of beta-tryptase.

The protein resides in the cytoplasm. In terms of biological role, inhibitor of cathepsin G, kallikrein-8 and thrombin. May play an important role in the inner ear in the protection against leakage of lysosomal content during stress. May be involved in the regulation of serine proteinases present in the brain or extravasated from the blood. The polypeptide is Serpin B6 (SERPINB6) (Macaca fascicularis (Crab-eating macaque)).